A 708-amino-acid chain; its full sequence is Polyribonucleotide nucleotidyltransferase (708 aa).

Asp-488 and Asp-494 together coordinate Mg(2+). One can recognise a KH domain in the interval Pro-555–Ile-614. The region spanning Gly-624–Lys-692 is the S1 motif domain.

The protein belongs to the polyribonucleotide nucleotidyltransferase family. As to quaternary structure, component of the RNA degradosome, which is a multiprotein complex involved in RNA processing and mRNA degradation. Requires Mg(2+) as cofactor.

The protein localises to the cytoplasm. The catalysed reaction is RNA(n+1) + phosphate = RNA(n) + a ribonucleoside 5'-diphosphate. Its function is as follows. Involved in mRNA degradation. Catalyzes the phosphorolysis of single-stranded polyribonucleotides processively in the 3'- to 5'-direction. This is Polyribonucleotide nucleotidyltransferase from Pseudoalteromonas translucida (strain TAC 125).